Reading from the N-terminus, the 2212-residue chain is Voltage-dependent P/Q-type calcium channel subunit alpha-1A (2212 aa).

The Cytoplasmic portion of the chain corresponds to methionine 1–proline 100. An I repeat occupies asparagine 87 to phenylalanine 365. A helical membrane pass occupies residues proline 101–leucine 119. At glutamate 120–threonine 138 the chain is on the extracellular side. Residues glutamate 139–alanine 156 form a helical membrane-spanning segment. Residues leucine 157–arginine 168 are Cytoplasmic-facing. Residues asparagine 169–leucine 184 traverse the membrane as a helical segment. Residues alanine 185 to aspartate 192 are Extracellular-facing. A helical membrane pass occupies residues leucine 193–isoleucine 211. The Cytoplasmic segment spans residues proline 212 to glutamine 230. The chain crosses the membrane as a helical span at residues isoleucine 231 to tyrosine 250. Over methionine 251–tryptophan 337 the chain is Extracellular. The N-linked (GlcNAc...) asparagine glycan is linked to asparagine 285. Glutamate 320 contributes to the Ca(2+) binding site. A helical membrane pass occupies residues asparagine 338–serine 362. At glycine 363–glutamine 489 the chain is on the cytoplasmic side. A binding to the beta subunit region spans residues glutamine 385–glutamate 402. Threonine 411 carries the phosphothreonine modification. Serine 450 and serine 453 each carry phosphoserine. The stretch at glutamate 475 to leucine 719 is one II repeat. Residues alanine 490–valine 509 form a helical membrane-spanning segment. The Extracellular portion of the chain corresponds to histidine 510–tyrosine 523. The helical transmembrane segment at alanine 524 to leucine 543 threads the bilayer. Over glycine 544 to serine 551 the chain is Cytoplasmic. Residues serine 552–tryptophan 570 traverse the membrane as a helical segment. Residues alanine 571–glycine 580 lie on the Extracellular side of the membrane. A helical transmembrane segment spans residues isoleucine 581 to tryptophan 599. The Cytoplasmic segment spans residues alanine 600 to serine 618. The chain crosses the membrane as a helical span at residues leucine 619 to phenylalanine 638. The Extracellular portion of the chain corresponds to glycine 639–valine 691. A Ca(2+)-binding site is contributed by glutamate 670. A helical membrane pass occupies residues phenylalanine 692 to valine 716. At aspartate 717–tyrosine 1190 the chain is on the cytoplasmic side. Serine 752, serine 755, and serine 792 each carry phosphoserine. 4 stretches are compositionally biased toward basic and acidic residues: residues proline 814 to leucine 824, arginine 850 to arginine 862, alanine 871 to proline 924, and arginine 932 to aspartate 958. 2 disordered regions span residues proline 814–glutamate 1117 and valine 1137–proline 1170. Serine 1038, serine 1042, and serine 1051 each carry phosphoserine. The segment covering glycine 1056–alanine 1073 has biased composition (polar residues). The segment covering serine 1074–asparagine 1083 has biased composition (low complexity). A compositionally biased stretch (polar residues) spans glutamate 1094 to lysine 1111. Over residues lysine 1153–glutamate 1163 the composition is skewed to acidic residues. Residues asparagine 1182–phenylalanine 1465 form an III repeat. A helical transmembrane segment spans residues isoleucine 1191–alanine 1214. Topologically, residues glutamate 1215–phenylalanine 1231 are extracellular. The chain crosses the membrane as a helical span at residues aspartate 1232–glycine 1251. The Cytoplasmic segment spans residues leucine 1252–alanine 1258. The chain crosses the membrane as a helical span at residues tyrosine 1259 to threonine 1282. Residues glycine 1283–isoleucine 1293 are Extracellular-facing. The chain crosses the membrane as a helical span at residues lysine 1294–leucine 1311. Topologically, residues proline 1312–asparagine 1330 are cytoplasmic. Residues isoleucine 1331–phenylalanine 1350 traverse the membrane as a helical segment. Residues lysine 1351–glutamate 1437 lie on the Extracellular side of the membrane. A Ca(2+)-binding site is contributed by glutamate 1411. Residues methionine 1438–isoleucine 1462 form a helical membrane-spanning segment. Topologically, residues isoleucine 1463–proline 1518 are cytoplasmic. One copy of the IV repeat lies at asparagine 1502–phenylalanine 1765. The helical transmembrane segment at phenylalanine 1519–lysine 1537 threads the bilayer. The Extracellular segment spans residues phenylalanine 1538 to valine 1551. The helical transmembrane segment at phenylalanine 1552–isoleucine 1573 threads the bilayer. Residues leucine 1574 to alanine 1580 lie on the Cytoplasmic side of the membrane. Residues tryptophan 1581–glutamate 1600 traverse the membrane as a helical segment. Residues phenylalanine 1601–asparagine 1607 are Extracellular-facing. N-linked (GlcNAc...) asparagine glycosylation is present at asparagine 1607. A helical membrane pass occupies residues leucine 1608–glycine 1626. Residues tyrosine 1627 to tyrosine 1645 are Cytoplasmic-facing. Residues valine 1646–phenylalanine 1665 traverse the membrane as a helical segment. The Extracellular portion of the chain corresponds to glycine 1666 to phenylalanine 1737. Residues alanine 1738–aspartate 1763 form a helical membrane-spanning segment. Residues asparagine 1764–glutamine 2212 lie on the Cytoplasmic side of the membrane. Phosphothreonine is present on threonine 1935. The interval glutamine 1940 to glutamine 2212 is disordered. Polar residues-rich tracts occupy residues threonine 1948–leucine 1963 and glutamine 1972–tryptophan 1997. Phosphoserine is present on residues serine 1998, serine 2016, serine 2028, serine 2030, serine 2071, and serine 2091. A compositionally biased stretch (polar residues) spans proline 2008–valine 2017. Basic and acidic residues predominate over residues glutamate 2018 to leucine 2034. Positions leucine 2064–methionine 2073 are enriched in polar residues. Composition is skewed to basic and acidic residues over residues arginine 2085–arginine 2102 and proline 2143–arginine 2153. Residues proline 2154–proline 2172 show a composition bias toward basic residues. Residues proline 2173 to glutamine 2212 are compositionally biased toward basic and acidic residues.

It belongs to the calcium channel alpha-1 subunit (TC 1.A.1.11) family. CACNA1A subfamily. Voltage-dependent calcium channels are multisubunit complexes, consisting of alpha-1, alpha-2, beta and delta subunits in a 1:1:1:1 ratio. The channel activity is directed by the pore-forming and voltage-sensitive alpha-1 subunit. In many cases, this subunit is sufficient to generate voltage-sensitive calcium channel activity. The auxiliary subunits beta and alpha-2/delta linked by a disulfide bridge regulate the channel activity. Interacts (via C-terminal CDB motif) with CABP1 in the pre- and postsynaptic membranes. Interacts with the spider omega-agatoxin-IVA (AC P30288). Interacts with TSPOAP1. Brain specific. Purkinje cells contain predominantly P-type VSCC, the Q-type being a prominent calcium current in cerebellar granule cells. Also found in heart, in kidney distal convoluted tubule (DCT), and in pituitary.

The protein resides in the cell membrane. The enzyme catalyses Ca(2+)(in) = Ca(2+)(out). Its function is as follows. Voltage-sensitive calcium channels (VSCC) mediate the entry of calcium ions into excitable cells and are also involved in a variety of calcium-dependent processes, including muscle contraction, hormone or neurotransmitter release, gene expression, cell motility, cell division and cell death. The isoform alpha-1A gives rise to P and/or Q-type calcium currents. P/Q-type calcium channels belong to the 'high-voltage activated' (HVA) group and are specifically blocked by the spider omega-agatoxin-IVA (AC P30288). They are however insensitive to dihydropyridines (DHP). In Rattus norvegicus (Rat), this protein is Voltage-dependent P/Q-type calcium channel subunit alpha-1A.